We begin with the raw amino-acid sequence, 244 residues long: Thaumatin-like protein 1 (244 aa).

An N-terminal signal peptide occupies residues 1–22 (MKFEALIGLVLVFLSEHAGVYS). Cystine bridges form between cysteine 31–cysteine 243, cysteine 79–cysteine 89, cysteine 94–cysteine 101, cysteine 149–cysteine 232, cysteine 154–cysteine 215, cysteine 162–cysteine 178, cysteine 182–cysteine 191, and cysteine 192–cysteine 202. The N-linked (GlcNAc...) asparagine glycan is linked to asparagine 150.

This sequence belongs to the thaumatin family. Post-translationally, N-glycosylated. In terms of tissue distribution, style.

It is found in the secreted. The sequence is that of Thaumatin-like protein 1 (TL1) from Pyrus pyrifolia (Chinese pear).